Consider the following 215-residue polypeptide: Cytochrome b6 (215 aa).

Residues 32-52 form a helical membrane-spanning segment; the sequence is IFYCLGGITLTCFLVQVATGF. Cys35 is a heme c binding site. Residues His86 and His100 each contribute to the heme b site. 3 consecutive transmembrane segments (helical) span residues 90-110, 116-136, and 186-206; these read ASMM…TGGF, LTWV…VTGY, and LHTF…FSMI. Heme b-binding residues include His187 and His202.

It belongs to the cytochrome b family. PetB subfamily. As to quaternary structure, the 4 large subunits of the cytochrome b6-f complex are cytochrome b6, subunit IV (17 kDa polypeptide, PetD), cytochrome f and the Rieske protein, while the 4 small subunits are PetG, PetL, PetM and PetN. The complex functions as a dimer. Requires heme b as cofactor. The cofactor is heme c.

Its subcellular location is the plastid. The protein resides in the chloroplast thylakoid membrane. In terms of biological role, component of the cytochrome b6-f complex, which mediates electron transfer between photosystem II (PSII) and photosystem I (PSI), cyclic electron flow around PSI, and state transitions. The protein is Cytochrome b6 of Piper cenocladum (Ant piper).